The sequence spans 245 residues: DNA polymerase sliding clamp (245 aa).

This sequence belongs to the PCNA family. In terms of assembly, homotrimer. The subunits circularize to form a toroid; DNA passes through its center. Replication factor C (RFC) is required to load the toroid on the DNA.

Functionally, sliding clamp subunit that acts as a moving platform for DNA processing. Responsible for tethering the catalytic subunit of DNA polymerase and other proteins to DNA during high-speed replication. The chain is DNA polymerase sliding clamp from Archaeoglobus fulgidus (strain ATCC 49558 / DSM 4304 / JCM 9628 / NBRC 100126 / VC-16).